Consider the following 481-residue polypeptide: Protein nucleotidyltransferase YdiU (481 aa).

8 residues coordinate ATP: Gly-85, Gly-87, Arg-88, Lys-108, Asp-120, Gly-121, Arg-172, and Arg-179. The active-site Proton acceptor is Asp-248. Mg(2+) contacts are provided by Asn-249 and Asp-258. An ATP-binding site is contributed by Asp-258.

Belongs to the SELO family. Mg(2+) is required as a cofactor. It depends on Mn(2+) as a cofactor.

It catalyses the reaction L-seryl-[protein] + ATP = 3-O-(5'-adenylyl)-L-seryl-[protein] + diphosphate. The catalysed reaction is L-threonyl-[protein] + ATP = 3-O-(5'-adenylyl)-L-threonyl-[protein] + diphosphate. The enzyme catalyses L-tyrosyl-[protein] + ATP = O-(5'-adenylyl)-L-tyrosyl-[protein] + diphosphate. It carries out the reaction L-histidyl-[protein] + UTP = N(tele)-(5'-uridylyl)-L-histidyl-[protein] + diphosphate. It catalyses the reaction L-seryl-[protein] + UTP = O-(5'-uridylyl)-L-seryl-[protein] + diphosphate. The catalysed reaction is L-tyrosyl-[protein] + UTP = O-(5'-uridylyl)-L-tyrosyl-[protein] + diphosphate. Functionally, nucleotidyltransferase involved in the post-translational modification of proteins. It can catalyze the addition of adenosine monophosphate (AMP) or uridine monophosphate (UMP) to a protein, resulting in modifications known as AMPylation and UMPylation. In Cereibacter sphaeroides (strain ATCC 17023 / DSM 158 / JCM 6121 / CCUG 31486 / LMG 2827 / NBRC 12203 / NCIMB 8253 / ATH 2.4.1.) (Rhodobacter sphaeroides), this protein is Protein nucleotidyltransferase YdiU.